The chain runs to 249 residues: uncharacterized protein (249 aa).

Residues 1 to 43 (MRRGRSRPAGAAPAALLLPLLLLLPLTGCDRLAAAPAEHAAAA) form the signal peptide. The segment at 40-59 (AAAAGDPAQDADRGRRLPPV) is disordered. The NodB homology domain occupies 68-243 (PVVFLTYDDG…TIEEQGLRVG (176 aa)).

This is an uncharacterized protein from Streptomyces coelicolor (strain ATCC BAA-471 / A3(2) / M145).